A 279-amino-acid polypeptide reads, in one-letter code: Thymidylate synthase (279 aa).

133–134 (RR) contributes to the dUMP binding site. Catalysis depends on cysteine 154, which acts as the Nucleophile. DUMP contacts are provided by residues 178 to 181 (RSND), asparagine 189, and 219 to 221 (HIY). Position 181 (aspartate 181) interacts with (6R)-5,10-methylene-5,6,7,8-tetrahydrofolate. Position 278 (alanine 278) interacts with (6R)-5,10-methylene-5,6,7,8-tetrahydrofolate.

The protein belongs to the thymidylate synthase family. Bacterial-type ThyA subfamily. As to quaternary structure, homodimer.

The protein resides in the cytoplasm. It catalyses the reaction dUMP + (6R)-5,10-methylene-5,6,7,8-tetrahydrofolate = 7,8-dihydrofolate + dTMP. Its pathway is pyrimidine metabolism; dTTP biosynthesis. In terms of biological role, catalyzes the reductive methylation of 2'-deoxyuridine-5'-monophosphate (dUMP) to 2'-deoxythymidine-5'-monophosphate (dTMP) while utilizing 5,10-methylenetetrahydrofolate (mTHF) as the methyl donor and reductant in the reaction, yielding dihydrofolate (DHF) as a by-product. This enzymatic reaction provides an intracellular de novo source of dTMP, an essential precursor for DNA biosynthesis. This chain is Thymidylate synthase, found in Streptococcus pneumoniae (strain ATCC 700669 / Spain 23F-1).